We begin with the raw amino-acid sequence, 468 residues long: Bifunctional protein GlmU (468 aa).

The pyrophosphorylase stretch occupies residues 1–233 (MAQAGSASPL…LEEANLVNDR (233 aa)). Residues 15–18 (LAAG), K29, Q79, and 84–85 (GT) contribute to the UDP-N-acetyl-alpha-D-glucosamine site. Residue D109 coordinates Mg(2+). UDP-N-acetyl-alpha-D-glucosamine is bound by residues G146, E159, N174, and N231. A Mg(2+)-binding site is contributed by N231. The tract at residues 234–254 (SQLARAEEILRRRILDAHMKE) is linker. The N-acetyltransferase stretch occupies residues 255 to 468 (GVTVRDPVST…GDRRRARTEG (214 aa)). The UDP-N-acetyl-alpha-D-glucosamine site is built by R336 and K354. The active-site Proton acceptor is the H366. The UDP-N-acetyl-alpha-D-glucosamine site is built by Y369 and N380. Residues A383, 389 to 390 (NY), and A426 each bind acetyl-CoA.

The protein in the N-terminal section; belongs to the N-acetylglucosamine-1-phosphate uridyltransferase family. It in the C-terminal section; belongs to the transferase hexapeptide repeat family. As to quaternary structure, homotrimer. It depends on Mg(2+) as a cofactor.

The protein resides in the cytoplasm. The enzyme catalyses alpha-D-glucosamine 1-phosphate + acetyl-CoA = N-acetyl-alpha-D-glucosamine 1-phosphate + CoA + H(+). The catalysed reaction is N-acetyl-alpha-D-glucosamine 1-phosphate + UTP + H(+) = UDP-N-acetyl-alpha-D-glucosamine + diphosphate. Its pathway is nucleotide-sugar biosynthesis; UDP-N-acetyl-alpha-D-glucosamine biosynthesis; N-acetyl-alpha-D-glucosamine 1-phosphate from alpha-D-glucosamine 6-phosphate (route II): step 2/2. It participates in nucleotide-sugar biosynthesis; UDP-N-acetyl-alpha-D-glucosamine biosynthesis; UDP-N-acetyl-alpha-D-glucosamine from N-acetyl-alpha-D-glucosamine 1-phosphate: step 1/1. It functions in the pathway bacterial outer membrane biogenesis; LPS lipid A biosynthesis. Catalyzes the last two sequential reactions in the de novo biosynthetic pathway for UDP-N-acetylglucosamine (UDP-GlcNAc). The C-terminal domain catalyzes the transfer of acetyl group from acetyl coenzyme A to glucosamine-1-phosphate (GlcN-1-P) to produce N-acetylglucosamine-1-phosphate (GlcNAc-1-P), which is converted into UDP-GlcNAc by the transfer of uridine 5-monophosphate (from uridine 5-triphosphate), a reaction catalyzed by the N-terminal domain. In Rubrobacter xylanophilus (strain DSM 9941 / JCM 11954 / NBRC 16129 / PRD-1), this protein is Bifunctional protein GlmU.